The primary structure comprises 493 residues: Tripartite motif-containing protein 5 (493 aa).

A2 is modified (N-acetylalanine). An RING-type zinc finger spans residues 15-59 (CPICLELLTQPLSLDCGHSFCQACLTANHKKSMLDKGESSCPVCR). At S86 the chain carries Phosphoserine. The B box-type zinc-finger motif lies at 90–132 (QKVDHCARHGEKLLLFCQEDGKVICWLCERSQEHRGHHTFLTE). C95, H98, C117, and H123 together coordinate Zn(2+). A coiled-coil region spans residues 131–240 (TEEVAREYQV…LISDLERRLQ (110 aa)). Residues 185–198 (FEQLRDILDWEESN) are required for interaction with GABARAP and for autophagy. Residues 281 to 493 (LKGMLEVFRE…VPMTLCSPSS (213 aa)) enclose the B30.2/SPRY domain.

Belongs to the TRIM/RBCC family. As to quaternary structure, can form homodimers and homotrimers. In addition to lower-order dimerization, also exhibits a higher-order multimerization and both low- and high-order multimerizations are essential for its restriction activity. Interacts with BTBD1 and BTBD2. Interacts with PSMC4, PSMC5, PSMD7 and HSPA8/HSC70. Interacts (via B30.2/SPRY domain) with HSPA1A/B. Interacts with PSMC2, MAP3K7/TAK1, TAB2 and TAB3. Interacts with SQSTM1. Interacts with TRIM6 and TRIM34. Interacts with ULK1 (phosphorylated form), GABARAP, GABARAPL1, GABARAPL2, MAP1LC3A, MAP1LC3C and BECN1. In terms of processing, degraded in a proteasome-independent fashion in the absence of viral infection but in a proteasome-dependent fashion following exposure to restriction sensitive virus. Autoubiquitinated in a RING finger- and UBE2D2-dependent manner. Monoubiquitinated by TRIM21. Deubiquitinated by Yersinia YopJ. Ubiquitination may not lead to proteasomal degradation.

It localises to the cytoplasm. The protein resides in the nucleus. The enzyme catalyses S-ubiquitinyl-[E2 ubiquitin-conjugating enzyme]-L-cysteine + [acceptor protein]-L-lysine = [E2 ubiquitin-conjugating enzyme]-L-cysteine + N(6)-ubiquitinyl-[acceptor protein]-L-lysine.. It participates in protein modification; protein ubiquitination. Its function is as follows. Capsid-specific restriction factor that prevents infection from non-host-adapted retroviruses. Blocks viral replication early in the life cycle, after viral entry but before reverse transcription. In addition to acting as a capsid-specific restriction factor, also acts as a pattern recognition receptor that activates innate immune signaling in response to the retroviral capsid lattice. Binding to the viral capsid triggers its E3 ubiquitin ligase activity, and in concert with the heterodimeric ubiquitin conjugating enzyme complex UBE2V1-UBE2N (also known as UBC13-UEV1A complex) generates 'Lys-63'-linked polyubiquitin chains, which in turn are catalysts in the autophosphorylation of the MAP3K7/TAK1 complex (includes TAK1, TAB2, and TAB3). Activation of the MAP3K7/TAK1 complex by autophosphorylation results in the induction and expression of NF-kappa-B and MAPK-responsive inflammatory genes, thereby leading to an innate immune response in the infected cell. Plays a role in regulating autophagy through activation of autophagy regulator BECN1 by causing its dissociation from its inhibitors BCL2 and TAB2. This Pan paniscus (Pygmy chimpanzee) protein is Tripartite motif-containing protein 5 (TRIM5).